We begin with the raw amino-acid sequence, 470 residues long: Ribulose bisphosphate carboxylase large chain (470 aa).

Substrate-binding residues include Asn115 and Thr165. Lys167 (proton acceptor) is an active-site residue. Residue Lys169 participates in substrate binding. Mg(2+) contacts are provided by Lys193, Asp195, and Glu196. The residue at position 193 (Lys193) is an N6-carboxylysine. His286 acts as the Proton acceptor in catalysis. 3 residues coordinate substrate: Arg287, His319, and Ser371.

It belongs to the RuBisCO large chain family. Type I subfamily. In terms of assembly, heterohexadecamer of 8 large chains and 8 small chains. The cofactor is Mg(2+).

The protein resides in the carboxysome. The catalysed reaction is 2 (2R)-3-phosphoglycerate + 2 H(+) = D-ribulose 1,5-bisphosphate + CO2 + H2O. It catalyses the reaction D-ribulose 1,5-bisphosphate + O2 = 2-phosphoglycolate + (2R)-3-phosphoglycerate + 2 H(+). Its function is as follows. RuBisCO catalyzes two reactions: the carboxylation of D-ribulose 1,5-bisphosphate, the primary event in carbon dioxide fixation, as well as the oxidative fragmentation of the pentose substrate in the photorespiration process. Both reactions occur simultaneously and in competition at the same active site. This is Ribulose bisphosphate carboxylase large chain from Prochlorococcus marinus (strain MIT 9303).